A 230-amino-acid polypeptide reads, in one-letter code: RNA polymerase sigma factor FliA (230 aa).

Positions 6–78 are sigma-70 factor domain-2; sequence LWQRYVPLVR…MLDELRSRDW (73 aa). The Interaction with polymerase core subunit RpoC motif lies at 33 to 36; it reads DLLQ. Residues 86-156 are sigma-70 factor domain-3; the sequence is NAREVASAMQ…VEPMLEGHED (71 aa). The sigma-70 factor domain-4 stretch occupies residues 175-223; that stretch reads AIEALPEREKMVLTLYYQEELNLKEIGAVLEVGESRVSQLHSQAIKRLR. A DNA-binding region (H-T-H motif) is located at residues 197-216; sequence LKEIGAVLEVGESRVSQLHS.

Belongs to the sigma-70 factor family. FliA subfamily.

Its subcellular location is the cytoplasm. In terms of biological role, sigma factors are initiation factors that promote the attachment of RNA polymerase to specific initiation sites and are then released. This sigma factor controls the expression of flagella-related genes. The polypeptide is RNA polymerase sigma factor FliA (Yersinia enterocolitica).